A 331-amino-acid polypeptide reads, in one-letter code: D-lactate/D-glycerate dehydrogenase (331 aa).

NAD(+)-binding positions include Arg154–Ile155, Asp174, Val205–Pro206, Asn211, Phe232–Arg234, and Asp258. Arg234 is an active-site residue. Glu263 is a catalytic residue. The Proton donor role is filled by His295.

Belongs to the D-isomer specific 2-hydroxyacid dehydrogenase family. In terms of assembly, homodimer.

The enzyme catalyses (R)-lactate + NAD(+) = pyruvate + NADH + H(+). It carries out the reaction (R)-glycerate + NAD(+) = 3-hydroxypyruvate + NADH + H(+). In terms of biological role, has both D-lactate and D-glycerate dehydrogenase activities. Equally active on pyruvate and hydroxypyruvate. In Pediococcus acidilactici, this protein is D-lactate/D-glycerate dehydrogenase.